Here is a 1385-residue protein sequence, read N- to C-terminus: Contactin-associated protein 1 (1385 aa).

An N-terminal signal peptide occupies residues 1-20 (MMSLRLFSILLATVVSGAWG). Over 21-1284 (WGYYGCNEEL…PYYHDDGWIA (1264 aa)) the chain is Extracellular. The F5/8 type C domain occupies 26–169 (CNEELVGPLY…IGLRLGIYGC (144 aa)). Cys26 and Cys169 are joined by a disulfide. N-linked (GlcNAc...) asparagine glycans are attached at residues Asn121, Asn129, and Asn277. 2 Laminin G-like domains span residues 204 to 356 (FKTE…AFRC) and 390 to 539 (FRTW…FDTC). Residues Cys324 and Cys356 are joined by a disulfide bond. N-linked (GlcNAc...) asparagine glycosylation is found at Asn421, Asn500, and Asn519. 4 cysteine pairs are disulfide-bonded: Cys507-Cys539, Cys545-Cys556, Cys550-Cys565, and Cys567-Cys577. Residues 545 to 577 (CSPNMCEHDGRCYQSWDDFICYCELTGYKGVTC) enclose the EGF-like 1 domain. The region spanning 577–796 (CHEPLYKESC…NTISFHTGAA (220 aa)) is the Fibrinogen C-terminal domain. Residues Asn598, Asn654, Asn665, Asn764, Asn805, Asn844, Asn861, Asn949, and Asn957 are each glycosylated (N-linked (GlcNAc...) asparagine). Positions 814–958 (FRTSAPSGVF…NASEGTFPNC (145 aa)) constitute a Laminin G-like 3 domain. 4 cysteine pairs are disulfide-bonded: Cys931/Cys958, Cys962/Cys975, Cys969/Cys984, and Cys986/Cys996. Positions 962–996 (CTHPRFPCFHGGRCVERYSYYTCDCDLTAFDGPYC) constitute an EGF-like 2 domain. Asn1079 and Asn1148 each carry an N-linked (GlcNAc...) asparagine glycan. The Laminin G-like 4 domain maps to 1089–1251 (FSTNSAPAVL…VQGELSESNC (163 aa)). The cysteines at positions 1210 and 1251 are disulfide-linked. A helical transmembrane segment spans residues 1285–1305 (ILLGFLVAFLLLGLVGMLVLF). At 1306 to 1385 (YLQNHRYKGS…PQILEESRSE (80 aa)) the chain is on the cytoplasmic side. Residues 1317–1385 (HTNEPKATHD…PQILEESRSE (69 aa)) are disordered. Over residues 1319 to 1329 (NEPKATHDSHP) the composition is skewed to basic and acidic residues. The span at 1334-1367 (PLPPSGPAQAPAPTPAPTQLPTPAPAPAPAPASG) shows a compositional bias: pro residues. The SH3-binding signature appears at 1334–1370 (PLPPSGPAQAPAPTPAPTQLPTPAPAPAPAPASGPGP). The residue at position 1384 (Ser1384) is a Phosphoserine.

Belongs to the neurexin family. Interacts with CNTN1/contactin in cis form. As to expression, expressed in brain. In myelinated nerve fibers predominantly found in paranodal axoglial junctions. In the internodal region of myelinated axons in the CNS and the PNS also found as a thin line apposing the inner mesaxon of the myelin sheath. In PNS neurons this line forms a circumferential ring that apposes the innermost aspect of Schmidt-Lanterman incisures.

The protein localises to the membrane. It localises to the cell junction. It is found in the paranodal septate junction. In terms of biological role, required, with CNTNAP2, for radial and longitudinal organization of myelinated axons. Plays a role in the formation of functional distinct domains critical for saltatory conduction of nerve impulses in myelinated nerve fibers. Demarcates the paranodal region of the axo-glial junction. In association with contactin involved in the signaling between axons and myelinating glial cells. This Mus musculus (Mouse) protein is Contactin-associated protein 1 (Cntnap1).